Reading from the N-terminus, the 61-residue chain is Small ribosomal subunit protein uS14 (61 aa).

The Zn(2+) site is built by Cys24, Cys27, Cys40, and Cys43.

It belongs to the universal ribosomal protein uS14 family. Zinc-binding uS14 subfamily. In terms of assembly, part of the 30S ribosomal subunit. Contacts proteins S3 and S10. Requires Zn(2+) as cofactor.

Binds 16S rRNA, required for the assembly of 30S particles and may also be responsible for determining the conformation of the 16S rRNA at the A site. The protein is Small ribosomal subunit protein uS14 of Alkaliphilus metalliredigens (strain QYMF).